The chain runs to 200 residues: Snake venom metalloproteinase rhomb-I (200 aa).

The region spanning 4 to 200 is the Peptidase M12B domain; the sequence is KYIELVVVAD…RKPQCILNKP (197 aa). Ca(2+)-binding residues include E7 and D91. Disulfide bonds link C115/C195, C155/C179, and C157/C162. H140 provides a ligand contact to Zn(2+). Residue E141 is part of the active site. Residues H144 and H150 each contribute to the Zn(2+) site. Residues C195 and N198 each contribute to the Ca(2+) site.

Monomer. Requires Zn(2+) as cofactor. In terms of tissue distribution, expressed by the venom gland.

The protein resides in the secreted. Snake venom zinc metalloproteinase that induces hemorrhage. This Lachesis muta rhombeata (Bushmaster) protein is Snake venom metalloproteinase rhomb-I.